A 107-amino-acid chain; its full sequence is Small ribosomal subunit protein bS6 (107 aa).

The protein belongs to the bacterial ribosomal protein bS6 family.

Its function is as follows. Binds together with bS18 to 16S ribosomal RNA. This is Small ribosomal subunit protein bS6 from Synechococcus elongatus (strain ATCC 33912 / PCC 7942 / FACHB-805) (Anacystis nidulans R2).